Consider the following 475-residue polypeptide: MKYIFAPPANKGLQQLNHALFESSHTLPALKIPAHASGIAMETLRSHILVAPRLRTIVDDPTDKKWRLLLLDPSMEASEINDLPNPLKEFALKHEAKLVKHTIELKYDYWTSDQVLRSILPDEMETPGAFETVGHIAHLNLRDRYQPFKHIIGQVILDKSSHIKTVVNKLDNIDHTFRFFQMEILAGINDMNAKLKEGGCFFHFDFSKVYWNSRLQGEHDRIIKLFGQNDLICDVFAGVGPFALPAAKHKRCVVFANDLNPQSFKYLMENIKLNKLETRILPFNMDGRQFIKQSLEDLNNPAIWNKITKQKPTSNDKKRNRKVESPTVAPLTDQPAISGIRHFKHYVMNLPATAIEFLDAFHGLYSGMRDVIMDSDLPTIHCHCFSNAKDVKADVIERVERVIGMPLGSNLIMVHSVRTVAPNKDMLCISFRLPSALAFAEPKILGKRKGLETEENLVSQSDVSKSSDNILEKDT.

S-adenosyl-L-methionine contacts are provided by residues His-219, 258–259 (DL), and 286–287 (DG). Residues 306 to 328 (KITKQKPTSNDKKRNRKVESPTV) are disordered. Residue Asn-349 coordinates S-adenosyl-L-methionine. Residues 456-469 (NLVSQSDVSKSSDN) show a composition bias toward polar residues. The interval 456–475 (NLVSQSDVSKSSDNILEKDT) is disordered.

The protein belongs to the class I-like SAM-binding methyltransferase superfamily. TRM5/TYW2 family. As to quaternary structure, monomer.

Its subcellular location is the mitochondrion matrix. It is found in the nucleus. The protein localises to the cytoplasm. The catalysed reaction is guanosine(37) in tRNA + S-adenosyl-L-methionine = N(1)-methylguanosine(37) in tRNA + S-adenosyl-L-homocysteine + H(+). In terms of biological role, specifically methylates the N1 position of guanosine-37 in various cytoplasmic and mitochondrial tRNAs. Methylation is not dependent on the nature of the nucleoside 5' of the target nucleoside. This is the first step in the biosynthesis of wybutosine (yW), a modified base adjacent to the anticodon of tRNAs and required for accurate decoding. The protein is tRNA (guanine(37)-N(1))-methyltransferase of Batrachochytrium dendrobatidis (strain JAM81 / FGSC 10211) (Frog chytrid fungus).